Here is a 175-residue protein sequence, read N- to C-terminus: General stress protein 14 (175 aa).

It belongs to the NAD(P)H dehydrogenase (quinone) family.

This chain is General stress protein 14 (ywrO), found in Bacillus subtilis (strain 168).